The sequence spans 347 residues: Gibberellin 3-beta-dioxygenase 2 (347 aa).

The Fe2OG dioxygenase domain occupies 197-301; that stretch reads DFQGTQAVIQ…RFSMAYLWGP (105 aa). Fe cation-binding residues include His225, Asp227, and His282. Arg292 is a catalytic residue. Arg292 provides a ligand contact to 2-oxoglutarate.

The protein belongs to the iron/ascorbate-dependent oxidoreductase family. GA3OX subfamily. L-ascorbate serves as cofactor. Fe(2+) is required as a cofactor. In terms of tissue distribution, highly expressed in seedlings but also expressed in roots, leaves, stems, flowers, siliques and seeds. Detected predominantly in the hypocotyl and roots of young seedlings and in the petioles and vasculature of leaves. Not expressed in the shoot apical meristem, but found in the elongation zone, the quiescent center cells and the columella cells of the root tips. Found in the cortex and the endodermis of the embryo axis in germinating seeds.

It carries out the reaction gibberellin A20 + 2-oxoglutarate + O2 = gibberellin A1 + succinate + CO2. Its pathway is plant hormone biosynthesis; gibberellin biosynthesis. In terms of biological role, converts the inactive gibberellin (GA) precursors GA9 and GA20 in the bioactives gibberellins GA4 and GA1. Involved in the production of bioactive GA for vegetative growth and development. This is Gibberellin 3-beta-dioxygenase 2 from Arabidopsis thaliana (Mouse-ear cress).